The chain runs to 605 residues: Pyruvate decarboxylase 1 (605 aa).

Asp67 and His154 together coordinate substrate. The thiamine pyrophosphate binding stretch occupies residues 432–514; sequence DSWFNCQKLR…FLINNGGYTI (83 aa). Mg(2+) contacts are provided by Asp482, Asn509, and Gly511. Residue Glu515 coordinates substrate.

The protein belongs to the TPP enzyme family. As to quaternary structure, homotetramer. The cofactor is a metal cation. Thiamine diphosphate is required as a cofactor.

The enzyme catalyses a 2-oxocarboxylate + H(+) = an aldehyde + CO2. This Oryza sativa subsp. indica (Rice) protein is Pyruvate decarboxylase 1 (PDC1).